The sequence spans 967 residues: Translation initiation factor IF-2 (967 aa).

2 disordered regions span residues 201 to 320 and 349 to 382; these read KPIV…PGFV and LQGK…ELEA. The span at 233-248 shows a compositional bias: polar residues; sequence TGPTFSGQTIDLSQFN. Over residues 256–272 the composition is skewed to low complexity; sequence PNKGGAKPAGAGNNNNN. Residues 354-363 are compositionally biased toward basic residues; it reads NKSKAAKYRR. The span at 364–382 shows a compositional bias: basic and acidic residues; it reads DKRDTHRQKSDDEQRELEA. The tr-type G domain occupies 465–635; it reads HRAPIVTVMG…LLEAEVLDLK (171 aa). The tract at residues 474 to 481 is G1; sequence GHVDHGKT. 474-481 serves as a coordination point for GTP; the sequence is GHVDHGKT. The interval 499 to 503 is G2; the sequence is GITQH. The G3 stretch occupies residues 521 to 524; that stretch reads DTPG. Residues 521-525 and 575-578 each bind GTP; these read DTPGH and NKVD. The interval 575–578 is G4; it reads NKVD. The segment at 611 to 613 is G5; that stretch reads SAK.

Belongs to the TRAFAC class translation factor GTPase superfamily. Classic translation factor GTPase family. IF-2 subfamily.

The protein resides in the cytoplasm. Its function is as follows. One of the essential components for the initiation of protein synthesis. Protects formylmethionyl-tRNA from spontaneous hydrolysis and promotes its binding to the 30S ribosomal subunits. Also involved in the hydrolysis of GTP during the formation of the 70S ribosomal complex. The sequence is that of Translation initiation factor IF-2 from Flavobacterium psychrophilum (strain ATCC 49511 / DSM 21280 / CIP 103535 / JIP02/86).